Consider the following 158-residue polypeptide: uncharacterized protein (158 aa).

The signal sequence occupies residues 1–19; that stretch reads MQKLLLAVLFFSLLAIATA. Positions 82 to 158 are disordered; it reads ANPKAEAEPG…VYENDDENEE (77 aa). Over residues 84–107 the composition is skewed to basic and acidic residues; that stretch reads PKAEAEPGSLDKEAGTKGEKEKNG. The segment covering 141–158 has biased composition (acidic residues); it reads DDDDDHDDVYENDDENEE.

Prismatic layer of shell (at protein level). Expressed primarily in the mantle with highest level in the mantle edge and lower level in the mantle pallium.

Its subcellular location is the secreted. This is an uncharacterized protein from Pinctada maxima (Silver-lipped pearl oyster).